The following is a 94-amino-acid chain: DASH complex subunit dad2 (94 aa).

Residues 18–38 (KLRDSSNDMVQQIETLAAKLE) adopt a coiled-coil conformation. A disordered region spans residues 72 to 94 (VRIPPSTSNTNASATEQGDVEEV). Residues 76–87 (PSTSNTNASATE) show a composition bias toward polar residues.

The protein belongs to the DASH complex DAD2 family. Component of the DASH complex consisting of ask1, dad1, dad2, dad3, dad4, dam1, duo1, dad5, spc19 and spc34, with a stoichiometry of one copy of each subunit per complex. Multiple DASH complexes oligomerize to form a ring that encircles spindle microtubules and organizes the rod-like NDC80 complexes of the outer kinetochore. DASH complex oligomerization strengthens microtubule attachments. On cytoplasmic microtubules, DASH complexes appear to form patches instead of rings.

The protein resides in the nucleus. Its subcellular location is the cytoplasm. It localises to the cytoskeleton. The protein localises to the spindle. It is found in the chromosome. The protein resides in the centromere. Its subcellular location is the kinetochore. Its function is as follows. Component of the DASH complex that connects microtubules with kinetochores and couples microtubule depolymerisation to chromosome movement; it is involved in retrieving kinetochores to the spindle poles before their re-orientation on the spindle in early mitosis and allows microtubule depolymerization to pull chromosomes apart and resist detachment during anaphase. Kinetochores, consisting of a centromere-associated inner segment and a microtubule-contacting outer segment, play a crucial role in chromosome segregation by mediating the physical connection between centromeric DNA and microtubules. Kinetochores also serve as an input point for the spindle assembly checkpoint, which delays anaphase until all chromosomes have bioriented on the mitotic spindle. The DASH complex mediates bipolar kinetochore-microtubule attachments and facilitates the formation of additional interactions between outer kinetochore components and spindle microtubules. During chromosome movement along the microtubule, it is required both for the sliding of kinetochores along the lateral side of the microtubule and also for microtubule end-on pulling on the kinetochore. Modulates cytoplasmic microtubule dynamics by tracking the plus-end of shortening microtubules and slowing their depolymerization. This chain is DASH complex subunit dad2, found in Schizosaccharomyces pombe (strain 972 / ATCC 24843) (Fission yeast).